Here is a 68-residue protein sequence, read N- to C-terminus: Conotoxin Ar5.3 (68 aa).

The N-terminal stretch at 1 to 19 is a signal peptide; the sequence is MLCLPVFIILLLLASPAAS. Residues 20-53 constitute a propeptide that is removed on maturation; the sequence is NPLEKRIQNDLIRAALEDADMENDPRSIIDSVKT.

It belongs to the conotoxin T superfamily. Contains 2 disulfide bonds that can be either 'C1-C3, C2-C4' or 'C1-C4, C2-C3', since these disulfide connectivities have been observed for conotoxins with cysteine framework V (for examples, see AC P0DQQ7 and AC P81755). In terms of tissue distribution, expressed by the venom duct.

The protein localises to the secreted. In Conus arenatus (Sand-dusted cone), this protein is Conotoxin Ar5.3.